The primary structure comprises 300 residues: Glutamyl-Q tRNA(Asp) synthetase (300 aa).

L-glutamate is bound by residues R8–T12 and D44. The short motif at P11–S21 is the 'HIGH' region element. Zn(2+)-binding residues include C100, C102, Y122, and C126. L-glutamate is bound by residues Y181 and R199. Positions K237–Q241 match the 'KMSKS' region motif. K240 is an ATP binding site.

Belongs to the class-I aminoacyl-tRNA synthetase family. GluQ subfamily. Zn(2+) serves as cofactor.

Catalyzes the tRNA-independent activation of glutamate in presence of ATP and the subsequent transfer of glutamate onto a tRNA(Asp). Glutamate is transferred on the 2-amino-5-(4,5-dihydroxy-2-cyclopenten-1-yl) moiety of the queuosine in the wobble position of the QUC anticodon. The sequence is that of Glutamyl-Q tRNA(Asp) synthetase from Synechococcus sp. (strain ATCC 27144 / PCC 6301 / SAUG 1402/1) (Anacystis nidulans).